Here is a 203-residue protein sequence, read N- to C-terminus: Na(+)-translocating NADH-quinone reductase subunit E (203 aa).

6 helical membrane passes run 12–32, 36–56, 82–102, 115–135, 145–165, and 181–201; these read AVFV…FLAL, MEAA…TVPV, FLGL…LEMV, GVFL…LFMV, LVYG…LAGI, and LGIT…FSGI.

It belongs to the NqrDE/RnfAE family. As to quaternary structure, composed of six subunits; NqrA, NqrB, NqrC, NqrD, NqrE and NqrF.

It localises to the cell inner membrane. It catalyses the reaction a ubiquinone + n Na(+)(in) + NADH + H(+) = a ubiquinol + n Na(+)(out) + NAD(+). NQR complex catalyzes the reduction of ubiquinone-1 to ubiquinol by two successive reactions, coupled with the transport of Na(+) ions from the cytoplasm to the periplasm. NqrA to NqrE are probably involved in the second step, the conversion of ubisemiquinone to ubiquinol. This is Na(+)-translocating NADH-quinone reductase subunit E from Hahella chejuensis (strain KCTC 2396).